Consider the following 164-residue polypeptide: Interferon gamma (164 aa).

The N-terminal stretch at 1–19 is a signal peptide; the sequence is MTCQTYNLFVLSVIMIYYG. 2 N-linked (GlcNAc...) asparagine glycosylation sites follow: Asn-42 and Asn-61.

It belongs to the type II (or gamma) interferon family. Homodimer.

It localises to the secreted. Its function is as follows. Produced by lymphocytes activated by specific antigens or mitogens. IFN-gamma, in addition to having antiviral activity, has important immunoregulatory functions. It is a potent activator of macrophages, it has antiproliferative effects on transformed cells and it can potentiate the antiviral and antitumor effects of the type I interferons. This chain is Interferon gamma (IFNG), found in Phasianus colchicus colchicus (Black-necked pheasant).